The primary structure comprises 958 residues: Protein translocase subunit SecA (958 aa).

Residues glutamine 87, 105 to 109 (GEGKT), and aspartate 524 each bind ATP. Residues 598–617 (RRIDNQLRGRSGRQGDPGRS) form a disordered region. Residues cysteine 939, cysteine 941, cysteine 950, and histidine 951 each contribute to the Zn(2+) site.

This sequence belongs to the SecA family. In terms of assembly, monomer and homodimer. Part of the essential Sec protein translocation apparatus which comprises SecA, SecYEG and auxiliary proteins SecDF-YajC and YidC. It depends on Zn(2+) as a cofactor.

The protein resides in the cell inner membrane. Its subcellular location is the cytoplasm. It carries out the reaction ATP + H2O + cellular proteinSide 1 = ADP + phosphate + cellular proteinSide 2.. Functionally, part of the Sec protein translocase complex. Interacts with the SecYEG preprotein conducting channel. Has a central role in coupling the hydrolysis of ATP to the transfer of proteins into and across the cell membrane, serving both as a receptor for the preprotein-SecB complex and as an ATP-driven molecular motor driving the stepwise translocation of polypeptide chains across the membrane. The chain is Protein translocase subunit SecA from Methylobacterium sp. (strain 4-46).